We begin with the raw amino-acid sequence, 307 residues long: ADP,ATP carrier protein 3 (307 aa).

3 Solcar repeats span residues 10-103 (TNFA…IKLM), 114-206 (KWFA…LKPL), and 214-300 (GSFL…LQMI). A run of 5 helical transmembrane segments spans residues 12–39 (FAIN…VKIL), 80–104 (TANV…KLMF), 112–132 (YGKW…LSLL), 182–203 (FMPS…FDSL), and 217–237 (LASF…SYPL). Residues arginine 85 and lysine 97 each contribute to the ADP site. ADP is bound at residue arginine 241. The segment at 241–246 (RRRMMM) is important for transport activity. Residues 241–246 (RRRMMM) carry the Nucleotide carrier signature motif motif. Residues 277–297 (CGANILRSVAGAGVISMYDQL) form a helical membrane-spanning segment.

This sequence belongs to the mitochondrial carrier (TC 2.A.29) family. As to quaternary structure, monomer.

It is found in the mitochondrion inner membrane. The catalysed reaction is ADP(in) + ATP(out) = ADP(out) + ATP(in). With respect to regulation, the matrix-open state (m-state) is inhibited by the membrane-permeable bongkrekic acid (BKA). The cytoplasmic-open state (c-state) is inhibited by the membrane-impermeable toxic inhibitor carboxyatractyloside (CATR). Functionally, ADP:ATP antiporter that mediates import of ADP into the mitochondrial matrix for ATP synthesis, and export of ATP out to fuel the cell. Cycles between the cytoplasmic-open state (c-state) and the matrix-open state (m-state): operates by the alternating access mechanism with a single substrate-binding site intermittently exposed to either the cytosolic (c-state) or matrix (m-state) side of the inner mitochondrial membrane. This Saccharomyces cerevisiae (strain ATCC 204508 / S288c) (Baker's yeast) protein is ADP,ATP carrier protein 3 (AAC3).